The chain runs to 347 residues: Transcription factor JunD (347 aa).

The interval 1–43 (METPFYGDEALSGLGGGASGSGGSFASPGRLFPGAPPTAAAGS) is disordered. Positions 13–23 (GLGGGASGSGG) are enriched in gly residues. The Menin-binding motif (MBM) motif lies at 27 to 39 (SPGRLFPGAPPTA). The MAP kinase docking motif; essential for its phosphorylation signature appears at 46 to 55 (KKDALTLSLS). Positions 62–86 (LKPAAAPPPTPLRADGAPSAAPPDG) are disordered. Low complexity predominate over residues 73–86 (LRADGAPSAAPPDG). Position 90 is a phosphoserine (serine 90). Serine 100 is modified (phosphoserine; by MAPK8). Threonine 117 is modified (phosphothreonine). The tract at residues 244–264 (QTVPDVPSFGESPPLSPIDMD) is disordered. Phosphoserine occurs at positions 251, 255, and 259. Positions 268-295 (RIKAERKRLRNRIAASKCRKRKLERISR) are basic motif. One can recognise a bZIP domain in the interval 268-331 (RIKAERKRLR…AQLKQKVLSH (64 aa)). Positions 296-324 (LEEKVKTLKSQNTELASTASLLREQVAQL) are leucine-zipper.

This sequence belongs to the bZIP family. Jun subfamily. In terms of assembly, heterodimer; binds DNA as a heterodimer. Component of an AP-1 transcription factor complex composed of JUN-FOS heterodimers. As part of the AP-1 transcription factor complex, forms heterodimers with FOS proteins, thereby binding to the AP-1 consensus sequence and stimulating transcription. Forms heterodimers with FOSB; thereby binding to the AP-1 consensus sequence. Interacts (via MBM motif) with MEN1; this interaction represses transcriptional activation. Interacts with MAPK10; this interaction is inhibited in the presence of MEN1. Phosphorylated by MAP kinases MAPK8 and MAPK10; phosphorylation is inhibited in the presence of MEN1.

It localises to the nucleus. Its function is as follows. Transcription factor binding AP-1 sites. Heterodimerizes with proteins of the FOS family to form an AP-1 transcription factor complex, thereby enhancing their DNA binding activity to an AP-1 consensus sequence 3'-TGA[GC]TCA-5' and enhancing their transcriptional activity. The chain is Transcription factor JunD (JUND) from Homo sapiens (Human).